Consider the following 403-residue polypeptide: 3-oxoacyl-[acyl-carrier-protein] synthase 2 (403 aa).

A Ketosynthase family 3 (KS3) domain is found at 1 to 403; sequence VITGMGALSP…GGHNAVLVFK (403 aa). Active-site for beta-ketoacyl synthase activity residues include C158, H297, and H334.

This sequence belongs to the thiolase-like superfamily. Beta-ketoacyl-ACP synthases family.

It catalyses the reaction a fatty acyl-[ACP] + malonyl-[ACP] + H(+) = a 3-oxoacyl-[ACP] + holo-[ACP] + CO2. The catalysed reaction is (9Z)-hexadecenoyl-[ACP] + malonyl-[ACP] + H(+) = 3-oxo-(11Z)-octadecenoyl-[ACP] + holo-[ACP] + CO2. It participates in lipid metabolism; fatty acid biosynthesis. In terms of biological role, involved in the type II fatty acid elongation cycle. Catalyzes the elongation of a wide range of acyl-ACP by the addition of two carbons from malonyl-ACP to an acyl acceptor. Can efficiently catalyze the conversion of palmitoleoyl-ACP (cis-hexadec-9-enoyl-ACP) to cis-vaccenoyl-ACP (cis-octadec-11-enoyl-ACP), an essential step in the thermal regulation of fatty acid composition. The polypeptide is 3-oxoacyl-[acyl-carrier-protein] synthase 2 (fabF) (Staphylococcus aureus).